The chain runs to 176 residues: Ribosome maturation factor RimM (176 aa).

The region spanning 93 to 170 is the PRC barrel domain; sequence DGEYYHADLI…ELPTEIEGDT (78 aa).

It belongs to the RimM family. As to quaternary structure, binds ribosomal protein uS19.

The protein resides in the cytoplasm. Its function is as follows. An accessory protein needed during the final step in the assembly of 30S ribosomal subunit, possibly for assembly of the head region. Essential for efficient processing of 16S rRNA. May be needed both before and after RbfA during the maturation of 16S rRNA. It has affinity for free ribosomal 30S subunits but not for 70S ribosomes. The chain is Ribosome maturation factor RimM from Rhodopseudomonas palustris (strain BisB5).